The primary structure comprises 79 residues: ATP synthase subunit c (79 aa).

The next 2 membrane-spanning stretches (helical) occupy residues 11 to 31 and 53 to 73; these read MAAA…IGIL and FFIV…LGLY.

The protein belongs to the ATPase C chain family. As to quaternary structure, F-type ATPases have 2 components, F(1) - the catalytic core - and F(0) - the membrane proton channel. F(1) has five subunits: alpha(3), beta(3), gamma(1), delta(1), epsilon(1). F(0) has three main subunits: a(1), b(2) and c(10-14). The alpha and beta chains form an alternating ring which encloses part of the gamma chain. F(1) is attached to F(0) by a central stalk formed by the gamma and epsilon chains, while a peripheral stalk is formed by the delta and b chains.

The protein localises to the cell inner membrane. Functionally, f(1)F(0) ATP synthase produces ATP from ADP in the presence of a proton or sodium gradient. F-type ATPases consist of two structural domains, F(1) containing the extramembraneous catalytic core and F(0) containing the membrane proton channel, linked together by a central stalk and a peripheral stalk. During catalysis, ATP synthesis in the catalytic domain of F(1) is coupled via a rotary mechanism of the central stalk subunits to proton translocation. Key component of the F(0) channel; it plays a direct role in translocation across the membrane. A homomeric c-ring of between 10-14 subunits forms the central stalk rotor element with the F(1) delta and epsilon subunits. The sequence is that of ATP synthase subunit c from Pectobacterium atrosepticum (strain SCRI 1043 / ATCC BAA-672) (Erwinia carotovora subsp. atroseptica).